The sequence spans 369 residues: 4-hydroxy-3-methylbut-2-en-1-yl diphosphate synthase (flavodoxin) (369 aa).

Cysteine 270, cysteine 273, cysteine 305, and glutamate 312 together coordinate [4Fe-4S] cluster.

Belongs to the IspG family. Requires [4Fe-4S] cluster as cofactor.

The enzyme catalyses (2E)-4-hydroxy-3-methylbut-2-enyl diphosphate + oxidized [flavodoxin] + H2O + 2 H(+) = 2-C-methyl-D-erythritol 2,4-cyclic diphosphate + reduced [flavodoxin]. Its pathway is isoprenoid biosynthesis; isopentenyl diphosphate biosynthesis via DXP pathway; isopentenyl diphosphate from 1-deoxy-D-xylulose 5-phosphate: step 5/6. Its function is as follows. Converts 2C-methyl-D-erythritol 2,4-cyclodiphosphate (ME-2,4cPP) into 1-hydroxy-2-methyl-2-(E)-butenyl 4-diphosphate. This chain is 4-hydroxy-3-methylbut-2-en-1-yl diphosphate synthase (flavodoxin), found in Pseudomonas putida (strain ATCC 47054 / DSM 6125 / CFBP 8728 / NCIMB 11950 / KT2440).